The primary structure comprises 355 residues: Probable butyrate kinase (355 aa).

This sequence belongs to the acetokinase family.

Its subcellular location is the cytoplasm. The enzyme catalyses butanoate + ATP = butanoyl phosphate + ADP. The polypeptide is Probable butyrate kinase (Clostridium botulinum (strain Eklund 17B / Type B)).